Here is a 131-residue protein sequence, read N- to C-terminus: Period circadian protein (131 aa).

Residues 29 to 109 (VTAPVELDPP…NSAGGASGGV (81 aa)) are disordered. The span at 71–93 (SGNFTTGSNVRMSSVTNTSNAGT) shows a compositional bias: low complexity. Residues 94–109 (GTSGGGNSAGGASGGV) show a composition bias toward gly residues.

Forms a heterodimer with timeless (TIM); the complex then translocates into the nucleus. In terms of processing, phosphorylated with a circadian rhythmicity, probably by the double-time protein (dbt). Phosphorylation could be implicated in the stability of per monomer and in the formation of heterodimer per-tim.

It localises to the nucleus. The protein localises to the cytoplasm. It is found in the perinuclear region. Functionally, essential for biological clock functions. Determines the period length of circadian and ultradian rhythms; an increase in PER dosage leads to shortened circadian rhythms and a decrease leads to lengthened circadian rhythms. Essential for the circadian rhythmicity of locomotor activity, eclosion behavior, and for the rhythmic component of the male courtship song that originates in the thoracic nervous system. The biological cycle depends on the rhythmic formation and nuclear localization of the TIM-PER complex. Light induces the degradation of TIM, which promotes elimination of PER. Nuclear activity of the heterodimer coordinatively regulates PER and TIM transcription through a negative feedback loop. Behaves as a negative element in circadian transcriptional loop. Does not appear to bind DNA, suggesting indirect transcriptional inhibition. This chain is Period circadian protein (per), found in Zaprionus tuberculatus (Vinegar fly).